Consider the following 186-residue polypeptide: Photosystem I assembly protein Ycf4 (186 aa).

The next 2 helical transmembrane spans lie at 26–46 and 66–86; these read WATI…SSYF and IVMT…WLTI.

It belongs to the Ycf4 family.

Its subcellular location is the plastid. The protein localises to the chloroplast thylakoid membrane. Seems to be required for the assembly of the photosystem I complex. The sequence is that of Photosystem I assembly protein Ycf4 from Pyropia yezoensis (Susabi-nori).